A 1110-amino-acid polypeptide reads, in one-letter code: MMAPSTEDPDTVVEAQRRGSFSKKKNANGWNKVELVDQCAKQMGSEDKQPGGGDVKTENDPSKNGLGSATSNFIQSSVPPSHQTLSNPLQLSPPAEASVAQQSGASQVFPTFQAALGASSDELLQPNATSSSTSSSASTSSIVPVVKFTNQTAPNGSTVATSVGQNVRLTINGKRVGRPPGTFKRPQNNAANSSNSGNDSDMMGDHDLTCRWKSCNSSFQTLKALVDHVQESHVQSTEQEHHAWRCEWEGCDRNETFKALYMLIVHVRRHTGEKPNKCEYPGCGKEYSRLENLKTHRRTHTGEKPYKCEFADCEKAFSNASDRAKHQNRTHSNLKPYSCQIPQCTKSYTDPSSLRKHIKAVHGDDEYEKAKKSRPANYSNRRRPDHRLAPPTGAMSHPYLATPNSGASVVAHSSVHQQNFINMALAQHHHNAQRAQQLMAATGNVMPMMDPASAAAAAQAQAHHQAQAQMLQTHMMQQAQIQAAAQMQAQVQHQAAMQAHAMQQAQMVLQNNLLGAQSLLSPFSPLLPPSRAPNVMAMLQTPPTPTSVAPMFDIMTSRAPMAPVVSAPTAPAPLVPAPVPASPVFDELREQMREVEPLQQQQQQEPMDQDLQDIRVDGDSDDEDEEEPRTPSGALLLPRGGNNGDGGFGGSGSSRASSGSGTMELSAAPISQNGSRASGSGERGMRSFLIADILQLAADFQNERLLSDVLDLAIFDTRDVRSLHNIYQVYIRAHKAIPITRRPLDWNETHQLHNLYHDPRFNRAEHQDSPAIRDRDTRFWRTIAEANTMRQRQIEPVPLDDDDEGYFDEMVHRVQNGRLNEQFMEGFESDDDDGFEDEDDVPGLGIAVYRGRRRVRREALKQANLDIQEAETAGRNVGGFGDEEDRNNRGHDQDRSFLDHYYPPMVVVVETESPQIVRDQEMMRQFEEAKKNVETDEIKKRAEAMQFGTSSSHHHTKTLLIQRALFDKTSSVRRSLLQFITISVDQEELRQSCHATSAPQGAHVVHNVVDEFDSIMRAQEDSNNRILLSLDIPAPSAVTGVSGSITHADNSALQLQQEQPTSSFSSWFPEDDPIYALPPPPPPPAPPRRRRSADNKDDSENIPKKPRHQF.

Disordered stretches follow at residues Met1–Ser103 and Thr170–Met202. Positions Gly44 to Pro61 are enriched in basic and acidic residues. Polar residues predominate over residues Gly65–Gln90. Over residues Asn188–Asp201 the composition is skewed to low complexity. The C2H2-type 1; low DNA-binding affinity zinc-finger motif lies at Leu208–His233. The segment at Trp244–His270 adopts a C2H2-type 2; low DNA-binding affinity zinc-finger fold. C2H2-type zinc fingers lie at residues Asn276–His300, Tyr306–His331, and Tyr337–His362. 4 disordered regions span residues Gly363–His397, Glu594–Glu682, Arg875–Arg895, and Gln1057–Phe1110. A compositionally biased stretch (low complexity) spans Pro597–Pro606. Residues Gly641–Gly652 are compositionally biased toward gly residues. Residues Pro669–Ser678 show a composition bias toward polar residues. Residues Arg886 to Arg895 are compositionally biased toward basic and acidic residues. Residues Gln1057 to Ser1066 show a composition bias toward polar residues. The span at Ala1076–Pro1086 shows a compositional bias: pro residues. Residues Ser1092–Pro1103 show a composition bias toward basic and acidic residues.

It belongs to the GLI C2H2-type zinc-finger protein family. As to quaternary structure, interacts with the MX regulatory domain of tra-2. In terms of tissue distribution, expressed in intestine and gonads (at protein level).

The protein resides in the cytoplasm. It is found in the nucleus. Its function is as follows. Plays a major role in controlling sexual phenotype. Terminal global regulator in a well-characterized cascade of sex-determining genes. Promotes female development. Interacts with tra-2 to promote spermatogenesis. Promotes spermatogenesis through the Tip60 HAT complex and by regulating the expression of genes, such as fog-3, required for male development. Association with chromatin and at the fog-3 promoter requires wdr-5.1, and may also require wdr-5.2. With trr-1, activates the fog-3 gene to determine sperm/oocyte cell fate. In hermaphrodites, binds to an intronic regulatory site in the ceh-30 gene, preventing ceh-30 transcription and thereby preventing survival of the CEM (cephalic male) sensory neurons. Represses the expression of the transcription factor dmd-3 in hermaphrodites to govern the timing and extent of male tail tip morphogenesis. Plays a role in controlling the sex-specific differentiation of PHC sensory neurons and represses the development of male-specific morphological features. The protein is Sex-determining transformer protein 1 of Caenorhabditis elegans.